The following is a 722-amino-acid chain: D-(-)-3-hydroxybutyrate oligomer hydrolase (722 aa).

A compositionally biased stretch (polar residues) spans 1-11 (MQQRHLSQSAH). Residues 1–20 (MQQRHLSQSAHSHGHGTRRA) form a disordered region. An N-terminal signal peptide occupies residues 1–36 (MQQRHLSQSAHSHGHGTRRAHRRNTIAIAVATLAVA). The active-site Charge relay system is serine 327. The tract at residues 671–697 (PPSQVVRTTPRGGADTDTVGPRIQPSN) is disordered.

It belongs to the D-(-)-3-hydroxybutyrate oligomer hydrolase family.

Its subcellular location is the secreted. It carries out the reaction (3R)-hydroxybutanoate dimer + H2O = 2 (R)-3-hydroxybutanoate + H(+). It participates in lipid metabolism; butanoate metabolism. In terms of biological role, participates in the degradation of poly-3-hydroxybutyrate (PHB). It works downstream of poly(3-hydroxybutyrate) depolymerase, hydrolyzing D(-)-3-hydroxybutyrate oligomers of various length (3HB-oligomers) into 3HB-monomers. This chain is D-(-)-3-hydroxybutyrate oligomer hydrolase, found in Cupriavidus metallidurans (strain ATCC 43123 / DSM 2839 / NBRC 102507 / CH34) (Ralstonia metallidurans).